Reading from the N-terminus, the 127-residue chain is ATP synthase epsilon chain (127 aa).

The protein belongs to the ATPase epsilon chain family. As to quaternary structure, F-type ATPases have 2 components, CF(1) - the catalytic core - and CF(0) - the membrane proton channel. CF(1) has five subunits: alpha(3), beta(3), gamma(1), delta(1), epsilon(1). CF(0) has three main subunits: a, b and c.

It localises to the cell inner membrane. In terms of biological role, produces ATP from ADP in the presence of a proton gradient across the membrane. This is ATP synthase epsilon chain from Leptospira interrogans serogroup Icterohaemorrhagiae serovar copenhageni (strain Fiocruz L1-130).